Consider the following 331-residue polypeptide: Serpentine receptor class alpha-1 (331 aa).

The next 7 membrane-spanning stretches (helical) occupy residues 22-42, 57-77, 104-124, 143-163, 189-209, 238-258, and 274-294; these read FAVFCSQLSIISTFILSVIAV, IILVFNFVYANIHQFMYAIIS, YTEVLYVGISGMIYSQTGILI, VGIIISTFVLIMSIATYQIII, FLFIALILTFVNLISSAAVMF, ICVVCMAQFVTMLVYSSGVLI, and LITWVYTVQYNALLFPLILIF.

The protein belongs to the nematode receptor-like protein sra family.

The protein resides in the membrane. This is Serpentine receptor class alpha-1 (sra-1) from Caenorhabditis elegans.